Here is a 370-residue protein sequence, read N- to C-terminus: Leucine-rich repeat-containing protein 19 (370 aa).

The signal sequence occupies residues Met-1–Ser-24. The Extracellular segment spans residues Ser-25 to Trp-270. N-linked (GlcNAc...) asparagine glycans are attached at residues Asn-32, Asn-37, Asn-62, and Asn-95. LRR repeat units lie at residues Lys-46–Thr-71, Tyr-72–Asn-95, Leu-96–Gly-119, Leu-120–Pro-143, and Arg-145–Leu-168. In terms of domain architecture, LRRCT spans Asn-176–His-227. N-linked (GlcNAc...) asparagine glycans are attached at residues Asn-179, Asn-192, Asn-195, Asn-202, Asn-251, and Asn-256. A helical membrane pass occupies residues Ala-271–Ile-291. The Cytoplasmic segment spans residues Lys-292–Asn-370.

As to quaternary structure, interacts with TRAF2 and TRAF6. Expressed in renal collecting duct epithelial cells.

The protein localises to the membrane. Its activity is regulated as follows. Activated by TLR ligands such as LPS, bacterial DNA and peptidoglycan. Functionally, pathogen-recognition receptor which mediates the activation of TRAF2- and TRAF6 NF-kappa-B signaling pathways and induces the expression of pro-inflammatory cytokines. In kidney, prevents infection by uropathogenic bacteria by inducing the production of cytokines, chemokines and antimicrobial substances. In gut, involved in host-microbiota interactions, plays a critical role in promoting the recruitment of immune cells and intestinal inflammation. This chain is Leucine-rich repeat-containing protein 19, found in Homo sapiens (Human).